The primary structure comprises 483 residues: Membrane-bound lytic murein transglycosylase F (483 aa).

The N-terminal stretch at 1-18 is a signal peptide; sequence MKGLIARFIAGFALLLWA. The tract at residues 19–267 is non-LT domain; sequence WDMVFPWQQL…RIEEKYFNHL (249 aa). Residues 269 to 483 form an LT domain region; that stretch reads HFDYVDIQSY…SKESDSTLKE (215 aa). Glu-312 is an active-site residue. Residues 458-483 are disordered; that stretch reads QQIQNNEEQPSVPQEISKESDSTLKE. Over residues 473-483 the composition is skewed to basic and acidic residues; it reads ISKESDSTLKE.

This sequence in the N-terminal section; belongs to the bacterial solute-binding protein 3 family. It in the C-terminal section; belongs to the transglycosylase Slt family.

The protein localises to the cell outer membrane. It catalyses the reaction Exolytic cleavage of the (1-&gt;4)-beta-glycosidic linkage between N-acetylmuramic acid (MurNAc) and N-acetylglucosamine (GlcNAc) residues in peptidoglycan, from either the reducing or the non-reducing ends of the peptidoglycan chains, with concomitant formation of a 1,6-anhydrobond in the MurNAc residue.. Murein-degrading enzyme that degrades murein glycan strands and insoluble, high-molecular weight murein sacculi, with the concomitant formation of a 1,6-anhydromuramoyl product. Lytic transglycosylases (LTs) play an integral role in the metabolism of the peptidoglycan (PG) sacculus. Their lytic action creates space within the PG sacculus to allow for its expansion as well as for the insertion of various structures such as secretion systems and flagella. The sequence is that of Membrane-bound lytic murein transglycosylase F from Actinobacillus pleuropneumoniae serotype 5b (strain L20).